Here is a 304-residue protein sequence, read N- to C-terminus: MWRGRDVISARDFNRVDLEELFEMAKYMEKYAKSRVEFLKGKIMAVAFFEPSTRTRLSFEVAMKRLGGDVIGFWGAEGTSVEKGETLADTIRMLDAYSDIIVIRHKYEGAAKLAAEVAESPVINAGDGAYNHPTQAMLDVYTIWREFGTVDGLNIGLLGDLRHARTINSLLEILTNFKVRVYLISPELLRPRVETINYIQSRGLMLSFHTNIEEVIHELDVVYVVRIQKERFIDPLEYERIKGSYKITLDTLKNVKKNLIILHPLPRVDEIDHRVDSTPYAKYFRQAAFGVPLRMALLYLILQP.

Residues Arg54 and Thr55 each coordinate carbamoyl phosphate. Position 83 (Lys83) interacts with L-aspartate. Residues Arg104, His132, and Gln135 each coordinate carbamoyl phosphate. 2 residues coordinate L-aspartate: Arg165 and Arg226. The carbamoyl phosphate site is built by Leu265 and Pro266.

This sequence belongs to the aspartate/ornithine carbamoyltransferase superfamily. ATCase family. In terms of assembly, heterooligomer of catalytic and regulatory chains.

It catalyses the reaction carbamoyl phosphate + L-aspartate = N-carbamoyl-L-aspartate + phosphate + H(+). Its pathway is pyrimidine metabolism; UMP biosynthesis via de novo pathway; (S)-dihydroorotate from bicarbonate: step 2/3. Functionally, catalyzes the condensation of carbamoyl phosphate and aspartate to form carbamoyl aspartate and inorganic phosphate, the committed step in the de novo pyrimidine nucleotide biosynthesis pathway. The protein is Aspartate carbamoyltransferase catalytic subunit of Pyrobaculum islandicum (strain DSM 4184 / JCM 9189 / GEO3).